The following is a 438-amino-acid chain: V-type ATP synthase beta chain (438 aa).

The protein belongs to the ATPase alpha/beta chains family.

In terms of biological role, produces ATP from ADP in the presence of a proton gradient across the membrane. The V-type beta chain is a regulatory subunit. The protein is V-type ATP synthase beta chain of Chlamydia trachomatis serovar A (strain ATCC VR-571B / DSM 19440 / HAR-13).